The following is a 300-amino-acid chain: Shikimate kinase, chloroplastic (300 aa).

Residues 1 to 65 (MEARVSQSLQ…SDRRVQLKVS (65 aa)) constitute a chloroplast transit peptide. 111 to 118 (GMMGCGKT) is a binding site for ATP. Threonine 118 provides a ligand contact to Mg(2+). The substrate site is built by aspartate 136, arginine 161, and glycine 183. Residue arginine 222 participates in ATP binding.

The protein belongs to the shikimate kinase family. The cofactor is Mg(2+).

The protein resides in the plastid. It is found in the chloroplast. The catalysed reaction is shikimate + ATP = 3-phosphoshikimate + ADP + H(+). The protein operates within metabolic intermediate biosynthesis; chorismate biosynthesis; chorismate from D-erythrose 4-phosphate and phosphoenolpyruvate: step 5/7. Its function is as follows. Catalyzes the specific phosphorylation of the 3-hydroxyl group of shikimic acid using ATP as a cosubstrate. The sequence is that of Shikimate kinase, chloroplastic (SK) from Solanum lycopersicum (Tomato).